The primary structure comprises 263 residues: Endonuclease 8 (263 aa).

The active-site Schiff-base intermediate with DNA is Pro-2. Residue Glu-3 is the Proton donor of the active site. Lys-53 serves as the catalytic Proton donor; for beta-elimination activity. Residues Gln-70, Arg-125, and Asn-169 each coordinate DNA. The FPG-type zinc-finger motif lies at 229–263 (KVFHRDGERCERCGGIIEKTTLSSRPFYWCPGCQH). Arg-253 serves as the catalytic Proton donor; for delta-elimination activity.

This sequence belongs to the FPG family. It depends on Zn(2+) as a cofactor.

The catalysed reaction is 2'-deoxyribonucleotide-(2'-deoxyribose 5'-phosphate)-2'-deoxyribonucleotide-DNA = a 3'-end 2'-deoxyribonucleotide-(2,3-dehydro-2,3-deoxyribose 5'-phosphate)-DNA + a 5'-end 5'-phospho-2'-deoxyribonucleoside-DNA + H(+). Involved in base excision repair of DNA damaged by oxidation or by mutagenic agents. Acts as a DNA glycosylase that recognizes and removes damaged bases. Has a preference for oxidized pyrimidines, such as thymine glycol, 5,6-dihydrouracil and 5,6-dihydrothymine. Has AP (apurinic/apyrimidinic) lyase activity and introduces nicks in the DNA strand. Cleaves the DNA backbone by beta-delta elimination to generate a single-strand break at the site of the removed base with both 3'- and 5'-phosphates. This chain is Endonuclease 8, found in Klebsiella pneumoniae subsp. pneumoniae (strain ATCC 700721 / MGH 78578).